Here is a 461-residue protein sequence, read N- to C-terminus: Ufm1-specific protease 2 (461 aa).

Catalysis depends on residues Cys294, Asp418, and His420.

This sequence belongs to the peptidase C78 family.

Its subcellular location is the endoplasmic reticulum. The protein resides in the cytoplasm. It is found in the nucleus. In terms of biological role, thiol-dependent isopeptidase that specifically cleaves UFM1, a ubiquitin-like modifier protein, from conjugated proteins, such as CD274/PD-L1, CYB5R3, DDRGK1, MRE11, RPL26/uL24, TRIP4 and RPL26/uL24. While it is also able to mediate the processing of UFM1 precursors, a prerequisite for conjugation reactions, UFSP2 mainly acts as a protein deUFMylase that mediates deconjugation of UFM1 from target proteins. Mediates deUFMylation of RPL26/uL24, a critical step to release the UFM1 ribosome E3 ligase (UREL) complex during the recycling of 60S ribosome subunits from the endoplasmic reticulum. Catalyzes deUFMylation of TRIP4, regulating intracellular nuclear receptors transactivation and thereby regulate cell proliferation and differentiation. The protein is Ufm1-specific protease 2 of Rattus norvegicus (Rat).